The primary structure comprises 663 residues: Nuclear receptor-binding protein homolog (663 aa).

Residues 1–14 (MSNSQANAGSSGSA) are compositionally biased toward low complexity. The disordered stretch occupies residues 1–112 (MSNSQANAGS…SEDESEILEE (112 aa)). Residues 19 to 46 (LNPSGSATLVPNLTTTNASSQATPASTI) show a composition bias toward polar residues. Composition is skewed to low complexity over residues 47–57 (PQQQQPQQSQP) and 81–94 (VVVA…NLDS). The segment covering 101–111 (DDSEDESEILE) has biased composition (acidic residues). Residues 122–392 (REEVDQRDVP…ANDLLFHPLL (271 aa)) enclose the Protein kinase domain. 2 disordered regions span residues 481–505 (PNFR…EPVD) and 638–663 (YVPQ…TTSN). Phosphoserine is present on residues S489, S495, and S498. At T500 the chain carries Phosphothreonine. A compositionally biased stretch (low complexity) spans 641–652 (QDQQQYQQQQQE).

Belongs to the protein kinase superfamily. Ser/Thr protein kinase family.

It is found in the cytoplasm. The protein resides in the cell cortex. In terms of biological role, may play a role in subcellular trafficking between the endoplasmic reticulum and Golgi apparatus. This is Nuclear receptor-binding protein homolog from Drosophila pseudoobscura pseudoobscura (Fruit fly).